A 219-amino-acid chain; its full sequence is Histone H1.4 (219 aa).

Positions 1-15 (MSETAPAAPAAPAPA) are enriched in low complexity. Positions 1–41 (MSETAPAAPAAPAPAEKTPVKKKARKAAGGAKRKTSGPPVS) are disordered. Ser-2 is subject to N-acetylserine. Ser-2 carries the post-translational modification Phosphoserine. Lys-17 carries the post-translational modification N6-acetyllysine. Thr-18 carries the phosphothreonine modification. The segment covering 20-35 (VKKKARKAAGGAKRKT) has biased composition (basic residues). An N6-acetyllysine; alternate modification is found at Lys-26. The residue at position 26 (Lys-26) is an N6-methyllysine; alternate. Lys-34 carries the post-translational modification N6-(beta-hydroxybutyryl)lysine; alternate. N6-succinyllysine; alternate is present on Lys-34. Residue Ser-36 is modified to Phosphoserine. An H15 domain is found at 36–109 (SGPPVSELIT…GASGSFKLNK (74 aa)). Lys-52 is modified (N6-(beta-hydroxybutyryl)lysine). Arg-54 carries the post-translational modification Citrulline. An N6-(beta-hydroxybutyryl)lysine mark is found at Lys-64, Lys-85, Lys-90, and Lys-106. Positions 92–219 (TLVQTKGTGA…KPKKTAAKKK (128 aa)) are disordered. Residues 119-140 (KAKRAGAAKAKKPAGAAKKPKK) are compositionally biased toward basic residues. Thr-146 carries the phosphothreonine modification. Basic residues-rich tracts occupy residues 149–160 (KSTKKTPKKAKK) and 168–185 (KKAKSPKKAKATKAKKAP). Ser-150 is subject to ADP-ribosylserine. Ser-187 bears the Phosphoserine mark. The span at 192–219 (KTVKPKAAKPKTSKPKAAKPKKTAAKKK) shows a compositional bias: basic residues.

The protein belongs to the histone H1/H5 family. Citrullination at Arg-54 (H1R54ci) by PADI4 takes place within the DNA-binding site of H1 and results in its displacement from chromatin and global chromatin decondensation, thereby promoting pluripotency and stem cell maintenance. Post-translationally, ADP-ribosylated on Ser-55, Ser-113 and Ser-150 in response to DNA damage. In terms of processing, H1 histones are progressively phosphorylated during the cell cycle, becoming maximally phosphorylated during late G2 phase and M phase, and being dephosphorylated sharply thereafter. Acetylated at Lys-26. Deacetylated at Lys-26 by SIRT1. Post-translationally, hydroxybutyrylation of histones is induced by starvation.

Its subcellular location is the nucleus. It localises to the chromosome. In terms of biological role, histone H1 protein binds to linker DNA between nucleosomes forming the macromolecular structure known as the chromatin fiber. Histones H1 are necessary for the condensation of nucleosome chains into higher-order structured fibers. Also acts as a regulator of individual gene transcription through chromatin remodeling, nucleosome spacing and DNA methylation. This chain is Histone H1.4, found in Mus musculus (Mouse).